The primary structure comprises 230 residues: Lipoprotein-releasing system ATP-binding protein LolD (230 aa).

One can recognise an ABC transporter domain in the interval Leu6 to Leu230. Gly42–Ser49 contributes to the ATP binding site.

It belongs to the ABC transporter superfamily. Lipoprotein translocase (TC 3.A.1.125) family. As to quaternary structure, the complex is composed of two ATP-binding proteins (LolD) and two transmembrane proteins (LolC and LolE).

Its subcellular location is the cell inner membrane. Part of the ABC transporter complex LolCDE involved in the translocation of mature outer membrane-directed lipoproteins, from the inner membrane to the periplasmic chaperone, LolA. Responsible for the formation of the LolA-lipoprotein complex in an ATP-dependent manner. This chain is Lipoprotein-releasing system ATP-binding protein LolD, found in Hydrogenovibrio crunogenus (strain DSM 25203 / XCL-2) (Thiomicrospira crunogena).